The following is a 439-amino-acid chain: Exodeoxyribonuclease 7 large subunit (439 aa).

This sequence belongs to the XseA family. In terms of assembly, heterooligomer composed of large and small subunits.

It localises to the cytoplasm. It catalyses the reaction Exonucleolytic cleavage in either 5'- to 3'- or 3'- to 5'-direction to yield nucleoside 5'-phosphates.. Bidirectionally degrades single-stranded DNA into large acid-insoluble oligonucleotides, which are then degraded further into small acid-soluble oligonucleotides. The protein is Exodeoxyribonuclease 7 large subunit of Haemophilus influenzae (strain 86-028NP).